The primary structure comprises 123 residues: Small ribosomal subunit protein uS12 (123 aa).

The residue at position 89 (Asp-89) is a 3-methylthioaspartic acid. Positions 104-123 are disordered; sequence TAGVKDRKQARSKYGAKRPK. The segment covering 113 to 123 has biased composition (basic residues); that stretch reads ARSKYGAKRPK.

The protein belongs to the universal ribosomal protein uS12 family. As to quaternary structure, part of the 30S ribosomal subunit. Contacts proteins S8 and S17. May interact with IF1 in the 30S initiation complex.

In terms of biological role, with S4 and S5 plays an important role in translational accuracy. Interacts with and stabilizes bases of the 16S rRNA that are involved in tRNA selection in the A site and with the mRNA backbone. Located at the interface of the 30S and 50S subunits, it traverses the body of the 30S subunit contacting proteins on the other side and probably holding the rRNA structure together. The combined cluster of proteins S8, S12 and S17 appears to hold together the shoulder and platform of the 30S subunit. This Chromobacterium violaceum (strain ATCC 12472 / DSM 30191 / JCM 1249 / CCUG 213 / NBRC 12614 / NCIMB 9131 / NCTC 9757 / MK) protein is Small ribosomal subunit protein uS12.